The following is a 683-amino-acid chain: Probable metal-nicotianamine transporter YSL3 (683 aa).

A run of 14 helical transmembrane segments spans residues 29 to 49 (LVTP…CFVG), 58 to 78 (IVPA…KWLI), 97 to 117 (MFLL…GFAT), 142 to 162 (HVPI…GVLI), 204 to 224 (VATI…QWFY), 265 to 285 (IVNF…YPFL), 309 to 329 (VFIS…TLIT), 372 to 392 (IPIP…TIAI), 404 to 424 (LAVL…ATGL), 448 to 468 (PGAV…LHIS), 490 to 510 (TGQI…FLAF), 553 to 573 (CMTF…VVLV), 595 to 615 (FFAG…LLAW), and 628 to 648 (SAVA…SALL).

Belongs to the YSL (TC 2.A.67.2) family.

The protein localises to the membrane. May be involved in the transport of nicotianamine-chelated metals. In Oryza sativa subsp. japonica (Rice), this protein is Probable metal-nicotianamine transporter YSL3 (YSL3).